The chain runs to 508 residues: Pancreatic alpha-amylase (508 aa).

Residues 1–15 (MKFVLLLSLIGFCWA) form the signal peptide. Q16 carries the post-translational modification Pyrrolidone carboxylic acid. Cystine bridges form between C43–C101, C85–C130, and C156–C172. Ca(2+) is bound by residues N115, R170, and D179. R207 lines the chloride pocket. The Nucleophile role is filled by D209. H213 lines the Ca(2+) pocket. The active-site Proton donor is E245. 2 residues coordinate chloride: N310 and R349. 2 disulfides stabilise this stretch: C390–C396 and C462–C474.

The protein belongs to the glycosyl hydrolase 13 family. As to quaternary structure, monomer. Requires Ca(2+) as cofactor. The cofactor is chloride.

Its subcellular location is the secreted. The protein localises to the extracellular space. It carries out the reaction Endohydrolysis of (1-&gt;4)-alpha-D-glucosidic linkages in polysaccharides containing three or more (1-&gt;4)-alpha-linked D-glucose units.. This is Pancreatic alpha-amylase (Amy2) from Rattus norvegicus (Rat).